The following is a 489-amino-acid chain: Beta-1,3-glucosyltransferase (489 aa).

Residue M1 is a topological domain, cytoplasmic. Residues R2 to E22 form a helical; Signal-anchor for type II membrane protein membrane-spanning segment. The Lumenal segment spans residues I23 to L489. An N-linked (GlcNAc...) asparagine glycan is attached at N78. Residues R486–L489 carry the Prevents secretion from ER motif.

This sequence belongs to the glycosyltransferase 31 family.

It is found in the endoplasmic reticulum membrane. It functions in the pathway protein modification; protein glycosylation. Its function is as follows. O-glucosyltransferase that transfers glucose toward fucose with a beta-1,3 linkage. Specifically glucosylates O-linked fucosylglycan on TSP type-1 domains of proteins, thereby contributing to elongation of O-fucosylglycan. This chain is Beta-1,3-glucosyltransferase, found in Mus musculus (Mouse).